Reading from the N-terminus, the 443-residue chain is Serine transporter (443 aa).

11 helical membrane passes run 38–60 (TGWV…PVQV), 65–87 (LWVF…RLFI), 111–131 (WGIL…FVYS), 150–170 (GLLS…VAIS), 183–203 (GMVL…VGMW), 215–235 (GLLV…ILFI), 265–285 (IAFG…TLAM), 319–339 (VSVI…YLGF), 368–388 (GIMI…APVL), 390–410 (FTSI…AWLV), and 422–442 (MSLY…FLAF).

The protein belongs to the amino acid/polyamine transporter 2 family. SdaC/TdcC subfamily.

Its subcellular location is the cell inner membrane. Functionally, transports both D- and L-serine; allows growth of strain CFT073 cells normally unable to transport D-serine on that substrate. Transport relies on the H(+) gradient and is not competed by L-threonine. May play a role in L-cysteine detoxification. This Escherichia coli O157:H7 protein is Serine transporter.